The sequence spans 600 residues: Glutamine--fructose-6-phosphate aminotransferase [isomerizing] (600 aa).

Cysteine 2 (nucleophile; for GATase activity) is an active-site residue. Positions 2–217 (CGIVGFIGEQ…DKEIVIVMKE (216 aa)) constitute a Glutamine amidotransferase type-2 domain. SIS domains lie at 283–422 (IRNA…AKGE) and 452–590 (LAKQ…VDKP). The For Fru-6P isomerization activity role is filled by lysine 595.

In terms of assembly, homodimer.

The protein localises to the cytoplasm. The enzyme catalyses D-fructose 6-phosphate + L-glutamine = D-glucosamine 6-phosphate + L-glutamate. Its function is as follows. Catalyzes the first step in hexosamine metabolism, converting fructose-6P into glucosamine-6P using glutamine as a nitrogen source. This is Glutamine--fructose-6-phosphate aminotransferase [isomerizing] from Bacillus thuringiensis subsp. konkukian (strain 97-27).